Reading from the N-terminus, the 255-residue chain is tRNA pseudouridine synthase A (255 aa).

The active-site Nucleophile is the Asp43. Tyr94 contacts substrate.

The protein belongs to the tRNA pseudouridine synthase TruA family.

The catalysed reaction is uridine(38/39/40) in tRNA = pseudouridine(38/39/40) in tRNA. Functionally, formation of pseudouridine at positions 38, 39 and 40 in the anticodon stem and loop of transfer RNAs. This chain is tRNA pseudouridine synthase A, found in Pyrobaculum islandicum (strain DSM 4184 / JCM 9189 / GEO3).